A 260-amino-acid chain; its full sequence is uncharacterized protein (260 aa).

This is an uncharacterized protein from Methanocaldococcus jannaschii (strain ATCC 43067 / DSM 2661 / JAL-1 / JCM 10045 / NBRC 100440) (Methanococcus jannaschii).